The primary structure comprises 264 residues: Small ribosomal subunit protein eS1 (264 aa).

Lys-34 carries the post-translational modification N6-acetyllysine; alternate. Lys-34 participates in a covalent cross-link: Glycyl lysine isopeptide (Lys-Gly) (interchain with G-Cter in SUMO2); alternate. Lys-56 is modified (N6-acetyllysine). The residue at position 155 (Tyr-155) is an ADP-ribosyltyrosine. Residues 233–264 (GEGSSSGKATGDETGAKVERADGYEPPVQESV) form a disordered region. A phosphoserine mark is found at Ser-236 and Ser-237. The span at 242 to 255 (TGDETGAKVERADG) shows a compositional bias: basic and acidic residues. The residue at position 249 (Lys-249) is an N6-acetyllysine; alternate. Residue Lys-249 forms a Glycyl lysine isopeptide (Lys-Gly) (interchain with G-Cter in SUMO2); alternate linkage. A Phosphotyrosine modification is found at Tyr-256. A Phosphoserine modification is found at Ser-263.

This sequence belongs to the eukaryotic ribosomal protein eS1 family. In terms of assembly, component of the small ribosomal subunit. Mature ribosomes consist of a small (40S) and a large (60S) subunit. The 40S subunit contains about 33 different proteins and 1 molecule of RNA (18S). The 60S subunit contains about 49 different proteins and 3 molecules of RNA (28S, 5.8S and 5S). Part of the small subunit (SSU) processome, composed of more than 70 proteins and the RNA chaperone small nucleolar RNA (snoRNA) U3. In terms of processing, ADP-ribosylated at Tyr-155 by PARP1 in presence of HPF1.

The protein localises to the cytoplasm. It is found in the nucleus. Its subcellular location is the nucleolus. Its function is as follows. Component of the small ribosomal subunit. The ribosome is a large ribonucleoprotein complex responsible for the synthesis of proteins in the cell. Part of the small subunit (SSU) processome, first precursor of the small eukaryotic ribosomal subunit. During the assembly of the SSU processome in the nucleolus, many ribosome biogenesis factors, an RNA chaperone and ribosomal proteins associate with the nascent pre-rRNA and work in concert to generate RNA folding, modifications, rearrangements and cleavage as well as targeted degradation of pre-ribosomal RNA by the RNA exosome. May play a role during erythropoiesis. The protein is Small ribosomal subunit protein eS1 of Callithrix jacchus (White-tufted-ear marmoset).